The primary structure comprises 229 residues: Octanoyltransferase (229 aa).

Positions 45–220 (ATAVDELWVV…ELARQFCFVL (176 aa)) constitute a BPL/LPL catalytic domain. Substrate contacts are provided by residues 84-91 (RGGQVTYH), 151-153 (ALG), and 164-166 (GVA). Cys-182 functions as the Acyl-thioester intermediate in the catalytic mechanism.

The protein belongs to the LipB family.

It localises to the cytoplasm. It catalyses the reaction octanoyl-[ACP] + L-lysyl-[protein] = N(6)-octanoyl-L-lysyl-[protein] + holo-[ACP] + H(+). Its pathway is protein modification; protein lipoylation via endogenous pathway; protein N(6)-(lipoyl)lysine from octanoyl-[acyl-carrier-protein]: step 1/2. Functionally, catalyzes the transfer of endogenously produced octanoic acid from octanoyl-acyl-carrier-protein onto the lipoyl domains of lipoate-dependent enzymes. Lipoyl-ACP can also act as a substrate although octanoyl-ACP is likely to be the physiological substrate. This is Octanoyltransferase from Xylella fastidiosa (strain 9a5c).